A 296-amino-acid chain; its full sequence is Bifunctional protein FolD (296 aa).

Residues 166–168 (GRS), S191, and I232 each bind NADP(+).

The protein belongs to the tetrahydrofolate dehydrogenase/cyclohydrolase family. Homodimer.

The catalysed reaction is (6R)-5,10-methylene-5,6,7,8-tetrahydrofolate + NADP(+) = (6R)-5,10-methenyltetrahydrofolate + NADPH. The enzyme catalyses (6R)-5,10-methenyltetrahydrofolate + H2O = (6R)-10-formyltetrahydrofolate + H(+). The protein operates within one-carbon metabolism; tetrahydrofolate interconversion. Its function is as follows. Catalyzes the oxidation of 5,10-methylenetetrahydrofolate to 5,10-methenyltetrahydrofolate and then the hydrolysis of 5,10-methenyltetrahydrofolate to 10-formyltetrahydrofolate. This is Bifunctional protein FolD from Cereibacter sphaeroides (strain ATCC 17025 / ATH 2.4.3) (Rhodobacter sphaeroides).